The following is a 102-amino-acid chain: Small ribosomal subunit protein bS6 (102 aa).

Belongs to the bacterial ribosomal protein bS6 family.

Binds together with bS18 to 16S ribosomal RNA. The sequence is that of Small ribosomal subunit protein bS6 from Desulfovibrio desulfuricans (strain ATCC 27774 / DSM 6949 / MB).